Consider the following 205-residue polypeptide: Putative protein phosphatase inhibitor 2-like protein 1 (205 aa).

4 disordered regions span residues 1-44 (MAAS…SKKS), 64-92 (GLMKIDEPSTPYHSTMGDDEDACSDTETT), 107-148 (AEGL…TLHY), and 171-205 (VEEMLETAHGESMNTEESNQGSTASDQQQNKSRSS). Required for binding PPP1CC regions lie at residues 12–17 (KGILKD) and 43–55 (KSQKWDEMNILAT). Residues 17–26 (DNTSTTSSMV) are compositionally biased toward polar residues. Positions 30 to 44 (EHPRGSVHEQLSKKS) are enriched in basic and acidic residues. At threonine 73 the chain carries Phosphothreonine; by GSK3. Acidic residues-rich tracts occupy residues 80–91 (GDDEDACSDTET) and 121–130 (SSGEEDSDLS). Serine 87 bears the Phosphoserine; by CK2 mark. Residues 131 to 144 (PEEREKKRQFEMRR) show a composition bias toward basic and acidic residues. Residues 147–150 (HYNE) form a required for binding PPP1CC catalytic center, displacing metal ions and inhibition of PPP1CC catalytic activity region. Over residues 182–205 (SMNTEESNQGSTASDQQQNKSRSS) the composition is skewed to polar residues.

This sequence belongs to the protein phosphatase inhibitor 2 family.

Its function is as follows. Inhibitor of protein-phosphatase 1. This is Putative protein phosphatase inhibitor 2-like protein 1 (PPP1R2P1) from Homo sapiens (Human).